Consider the following 393-residue polypeptide: UDP-sulfoquinovose synthase (393 aa).

NAD(+) contacts are provided by residues 31 to 35 (DNLST), 74 to 75 (DI), Arg-100, and Asn-118. Arg-100 contacts substrate. Residues Thr-144 and Tyr-182 each coordinate substrate. Thr-144 is an active-site residue. 2 residues coordinate NAD(+): Tyr-182 and Lys-186. The active-site Proton acceptor is Tyr-182. Lys-186 is a catalytic residue. Gln-209 provides a ligand contact to substrate. Val-212 lines the NAD(+) pocket. Residues 238 to 241 (VVNR), 253 to 255 (TVY), and 326 to 328 (RVE) contribute to the substrate site.

The protein belongs to the NAD(P)-dependent epimerase/dehydratase family. It depends on NAD(+) as a cofactor.

It catalyses the reaction sulfite + UDP-alpha-D-glucose + H(+) = UDP-alpha-D-6-sulfoquinovose + H2O. Functionally, catalyzes the biosynthesis of UDP-sulfoquinovose by the transfer of sulfite to UDP-glucose. Important for the assembly of the S-layer N-glycans. The reaction probably occurs through an NAD(+)-dependent oxidation/dehydration/enolization/sulfite addition process. In vitro, in the absence of sulfite, UDP-D-glucose is converted via UDP-4-keto-D-glucose to UDP-D-glucose-5,6-ene. This is UDP-sulfoquinovose synthase from Sulfolobus acidocaldarius (strain ATCC 33909 / DSM 639 / JCM 8929 / NBRC 15157 / NCIMB 11770).